The chain runs to 681 residues: T-box brain protein 1 (681 aa).

2 disordered regions span residues 43–83 (TDNL…RSKL) and 108–127 (SQSSQPQSAATAPSAMFPYP). The span at 58–68 (GMTNQSDTDNF) shows a compositional bias: polar residues. Residues 108–122 (SQSSQPQSAATAPSA) are compositionally biased toward low complexity. Residues 213-393 (LWLKFHRHQT…HNPFAKGFRD (181 aa)) constitute a DNA-binding region (T-box). Threonine 408 carries the phosphothreonine modification. A Phosphoserine modification is found at serine 410. The disordered stretch occupies residues 447–483 (PGAGAGPGPGTDRSVPHTNGLLSPQQAEDPGAPSPQR). Positions 462-472 (PHTNGLLSPQQ) are enriched in polar residues. Serine 594 is modified (phosphoserine). The interval 597-655 (APAAEDAKPKDLSDSSWIETPSSIKSIDSSDSGIYEQAKRRRISPADTPVSESSSPLKS) is disordered. The segment covering 618–628 (SSIKSIDSSDS) has biased composition (low complexity). A Phosphoserine modification is found at serine 640.

In terms of assembly, homodimer. Part of a complex containing CASK, TBR1 and TSPYL2; may modulate gene expression in response to neuronal synaptic activity. Forms homodimers. Interacts with FOXP2. Interacts with FOXP1. Interacts with BCL11A. Expressed in the developing and adult cortex. Expressed in the olfactory bulbs.

The protein resides in the nucleus. Functionally, transcriptional repressor involved in multiple aspects of cortical development, including neuronal migration, laminar and areal identity, and axonal projection. As transcriptional repressor of FEZF2, it blocks the formation of the corticospinal (CS) tract from layer 6 projection neurons, thereby restricting the origin of CS axons specifically to layer 5 neurons. The chain is T-box brain protein 1 (Tbr1) from Mus musculus (Mouse).